Reading from the N-terminus, the 82-residue chain is UPF0291 protein LJ_1507 (82 aa).

A disordered region spans residues Asp-61–Asp-82.

It belongs to the UPF0291 family.

The protein localises to the cytoplasm. The protein is UPF0291 protein LJ_1507 of Lactobacillus johnsonii (strain CNCM I-12250 / La1 / NCC 533).